The chain runs to 238 residues: Urease accessory protein UreG (238 aa).

Positions 1-15 are enriched in basic and acidic residues; the sequence is MPPHLIDGEPHDHAH. Positions 1–27 are disordered; the sequence is MPPHLIDGEPHDHAHDRPKRQRTPGEP. 34–41 is a binding site for GTP; it reads GPVGSGKT.

This sequence belongs to the SIMIBI class G3E GTPase family. UreG subfamily. In terms of assembly, homodimer. UreD, UreF and UreG form a complex that acts as a GTP-hydrolysis-dependent molecular chaperone, activating the urease apoprotein by helping to assemble the nickel containing metallocenter of UreC. The UreE protein probably delivers the nickel.

Its subcellular location is the cytoplasm. In terms of biological role, facilitates the functional incorporation of the urease nickel metallocenter. This process requires GTP hydrolysis, probably effectuated by UreG. The sequence is that of Urease accessory protein UreG from Nocardia farcinica (strain IFM 10152).